Consider the following 449-residue polypeptide: G-protein coupled receptor 61 (449 aa).

Over residues 1–14 (MESSPIPQSSGNSS) the composition is skewed to low complexity. The tract at residues 1–29 (MESSPIPQSSGNSSTLGRALQTPGPSTAS) is disordered. Topologically, residues 1–44 (MESSPIPQSSGNSSTLGRALQTPGPSTASGVPELGLRDVASESV) are extracellular. A glycan (N-linked (GlcNAc...) asparagine) is linked at Asn-12. Residues 45-67 (ALFFMLLLDLTAVAGNAAVMAVI) traverse the membrane as a helical segment. The Cytoplasmic segment spans residues 68 to 75 (AKTPALRK). The helical transmembrane segment at 76–98 (FVFVFHLCLVDLLAALTLMPLAM) threads the bilayer. At 99-112 (LSSSALFDHALFGE) the chain is on the extracellular side. A helical membrane pass occupies residues 113 to 135 (VACRLYLFLSVCFVSLAILSVSA). Over 136-155 (INVERYYYVVHPMRYEVRMT) the chain is Cytoplasmic. Residues 156-178 (LGLVASVLVGVWVKALAMASVPV) form a helical membrane-spanning segment. The Extracellular segment spans residues 179–206 (LGRVYWEEGAPSVNPGCSLQWSHSAYCQ). The chain crosses the membrane as a helical span at residues 207-229 (LFVVVFAVLYFLLPLILIFVVYC). At 230 to 287 (SMFRVARVAAMQHGPLPTWMETPRQRSESLSSRSTMVTSSGAHQTTPHRTFGGGKAAV) the chain is on the cytoplasmic side. Residues 288–310 (VLLAVGGQFLLCWLPYFSFHLYV) traverse the membrane as a helical segment. The Extracellular segment spans residues 311 to 324 (ALSAQPISAGQVEN). The chain crosses the membrane as a helical span at residues 325–344 (VVTWIGYFCFTSNPFFYGCL). Over 345-449 (NRQIRGELSK…RPAPSPRLES (105 aa)) the chain is Cytoplasmic.

The protein belongs to the G-protein coupled receptor 1 family. As to quaternary structure, forms heterodimer with MTNR1B. Interacts with ARRB1 and ARRB2 in a spontaneous and agonist-independent manner; leading to the internalization of GPR61 in the endosomal compartment. As to expression, predominantly expressed in the brain and testes, with relatively lower expression observed in the eye, adrenal gland and pituitary gland.

It localises to the cell membrane. Its subcellular location is the endosome membrane. Orphan G-protein coupled receptor. Constitutively activates the G(s)-alpha/cAMP signaling pathway. Shows a reciprocal regulatory interaction with the melatonin receptor MTNR1B most likely through receptor heteromerization. May be involved in the regulation of food intake and body weight. The polypeptide is G-protein coupled receptor 61 (Gpr61) (Mus musculus (Mouse)).